The following is a 346-amino-acid chain: NADH-ubiquinone oxidoreductase chain 2 (346 aa).

Helical transmembrane passes span 25-45 (NLLLMWVGLEMSLLAIIPLLA), 56-76 (ATKYFLTQATASMIILLVIIL), 94-114 (LLNMMLISLAMKLGLAPFHYW), 122-142 (IPLHIGLILLTWQKIAPLSIL), 148-168 (LLNPTITTILAISSVFVGAWG), 178-198 (IMAYSSIAHMGWMTAILPYNP), 200-220 (LTLLNLTIYILLTVPMFITLM), 240-260 (ILTMTSIILLSLGGLPPLTGF), 278-298 (LSTLMAIMALLSLFFYTRLIY), and 325-345 (FILPTLTVLSTLTLPLSSQLI).

The protein belongs to the complex I subunit 2 family. As to quaternary structure, core subunit of respiratory chain NADH dehydrogenase (Complex I) which is composed of 45 different subunits. Interacts with TMEM242.

Its subcellular location is the mitochondrion inner membrane. It carries out the reaction a ubiquinone + NADH + 5 H(+)(in) = a ubiquinol + NAD(+) + 4 H(+)(out). Its function is as follows. Core subunit of the mitochondrial membrane respiratory chain NADH dehydrogenase (Complex I) which catalyzes electron transfer from NADH through the respiratory chain, using ubiquinone as an electron acceptor. Essential for the catalytic activity and assembly of complex I. The polypeptide is NADH-ubiquinone oxidoreductase chain 2 (Rattus norvegicus (Rat)).